Consider the following 767-residue polypeptide: Dipeptidyl peptidase 4 (767 aa).

At 1–6 the chain is on the cytoplasmic side; the sequence is MKTPWK. Residues 7–28 form a helical; Signal-anchor for type II membrane protein membrane-spanning segment; that stretch reads VLLGLLGVAALVTIITVPVVLL. The Extracellular segment spans residues 29–767; it reads NKDEAAADSR…HFLQQCFSLR (739 aa). 6 N-linked (GlcNAc...) asparagine glycosylation sites follow: Asn83, Asn90, Asn148, Asn217, Asn227, and Asn319. 4 disulfides stabilise this stretch: Cys326–Cys337, Cys383–Cys395, Cys445–Cys448, and Cys455–Cys473. Asn521 is a glycosylation site (N-linked (GlcNAc...) asparagine). The active-site Charge relay system is Ser631. Cysteines 650 and 763 form a disulfide. Asn686 carries an N-linked (GlcNAc...) asparagine glycan. Residues Asp709 and His741 each act as charge relay system in the active site.

The protein belongs to the peptidase S9B family. DPPIV subfamily. In terms of assembly, monomer. Homodimer. Heterodimer with Seprase (FAP). Requires homodimerization for optimal dipeptidyl peptidase activity and T-cell costimulation. Found in a membrane raft complex, at least composed of BCL10, CARD11, DPP4 and IKBKB. Associates with collagen. Interacts with PTPRC; the interaction is enhanced in an interleukin-12-dependent manner in activated lymphocytes. Interacts (via extracellular domain) with ADA; does not inhibit its dipeptidyl peptidase activity. Interacts with CAV1 (via the N-terminus); the interaction is direct. Interacts (via cytoplasmic tail) with CARD11 (via PDZ domain); its homodimerization is necessary for interaction with CARD11. Interacts with IGF2R; the interaction is direct. Interacts with GPC3. In terms of processing, the soluble form (Dipeptidyl peptidase 4 soluble form also named SDPP) derives from the membrane form (Dipeptidyl peptidase 4 membrane form also named MDPP) by proteolytic processing. N- and O-Glycosylated. Post-translationally, phosphorylated. Mannose 6-phosphate residues in the carbohydrate moiety are necessary for interaction with IGF2R in activated T-cells. Mannose 6-phosphorylation is induced during T-cell activation. In terms of tissue distribution, expressed in bile ducts and other epithelial brush borders (small intestine, kidney, colon, pancreatic duct); acinar structures in salivary glands; endothelial structures and T cell areas in thymus, spleen and lymph node.

Its subcellular location is the secreted. It is found in the cell membrane. The protein resides in the apical cell membrane. It localises to the cell projection. The protein localises to the invadopodium membrane. Its subcellular location is the lamellipodium membrane. It is found in the cell junction. The protein resides in the membrane raft. The enzyme catalyses Release of an N-terminal dipeptide, Xaa-Yaa-|-Zaa-, from a polypeptide, preferentially when Yaa is Pro, provided Zaa is neither Pro nor hydroxyproline.. Inhibited by GPC3 and diprotin A. In terms of biological role, cell surface glycoprotein receptor involved in the costimulatory signal essential for T-cell receptor (TCR)-mediated T-cell activation. Acts as a positive regulator of T-cell coactivation, by binding at least ADA, CAV1, IGF2R, and PTPRC. Its binding to CAV1 and CARD11 induces T-cell proliferation and NF-kappa-B activation in a T-cell receptor/CD3-dependent manner. Its interaction with ADA also regulates lymphocyte-epithelial cell adhesion. In association with FAP is involved in the pericellular proteolysis of the extracellular matrix (ECM), the migration and invasion of endothelial cells into the ECM. May be involved in the promotion of lymphatic endothelial cells adhesion, migration and tube formation. When overexpressed, enhanced cell proliferation, a process inhibited by GPC3. Also acts as a serine exopeptidase with a dipeptidyl peptidase activity that regulates various physiological processes by cleaving peptides in the circulation, including many chemokines, mitogenic growth factors, neuropeptides and peptide hormones. Removes N-terminal dipeptides sequentially from polypeptides having unsubstituted N-termini provided that the penultimate residue is proline. This is Dipeptidyl peptidase 4 (Dpp4) from Rattus norvegicus (Rat).